Reading from the N-terminus, the 424-residue chain is Catabolic NAD-specific glutamate dehydrogenase RocG (424 aa).

Substrate-binding residues include Lys80 and Lys104. Lys116 serves as the catalytic Proton donor. NAD(+)-binding residues include Thr200 and Asn231. A substrate-binding site is contributed by Ser358.

Belongs to the Glu/Leu/Phe/Val dehydrogenases family. As to quaternary structure, homohexamer. Interacts with transcriptional regulator GltC.

The catalysed reaction is L-glutamate + NAD(+) + H2O = 2-oxoglutarate + NH4(+) + NADH + H(+). Functionally, devoted to catabolic function of glutamate (and other amino acids of the glutamate family) utilization as sole nitrogen source. It is not involved in anabolic function of glutamate biosynthesis since B.subtilis possesses only one route of glutamate biosynthesis from ammonia, catalyzed by glutamate synthase. Wild-type cells are unable to utilize glutamate or glutamine as a sole carbon source; thus RocG does not function physiologically to synthesize glutamate, but it is involved in the utilization of arginine, and proline as carbon or nitrogen source. The catabolic RocG is essential for controlling gltAB expression via an inhibitory interactions with the transcriptional regulator GltC in response to the availability of sugars. The sequence is that of Catabolic NAD-specific glutamate dehydrogenase RocG from Bacillus subtilis (strain 168).